The following is a 360-amino-acid chain: 3-isopropylmalate dehydrogenase (360 aa).

An NAD(+)-binding site is contributed by 76–89; sequence GPKWDKIERDIRPE. Substrate-binding residues include arginine 96, arginine 106, arginine 134, and aspartate 224. Aspartate 224, aspartate 248, and aspartate 252 together coordinate Mg(2+). 282 to 294 lines the NAD(+) pocket; the sequence is GSAPDIAGLGIAN.

The protein belongs to the isocitrate and isopropylmalate dehydrogenases family. LeuB type 1 subfamily. In terms of assembly, homodimer. Mg(2+) serves as cofactor. Requires Mn(2+) as cofactor.

The protein resides in the cytoplasm. It catalyses the reaction (2R,3S)-3-isopropylmalate + NAD(+) = 4-methyl-2-oxopentanoate + CO2 + NADH. Its pathway is amino-acid biosynthesis; L-leucine biosynthesis; L-leucine from 3-methyl-2-oxobutanoate: step 3/4. Its function is as follows. Catalyzes the oxidation of 3-carboxy-2-hydroxy-4-methylpentanoate (3-isopropylmalate) to 3-carboxy-4-methyl-2-oxopentanoate. The product decarboxylates to 4-methyl-2 oxopentanoate. This Pseudomonas putida (strain ATCC 47054 / DSM 6125 / CFBP 8728 / NCIMB 11950 / KT2440) protein is 3-isopropylmalate dehydrogenase.